The sequence spans 122 residues: MIQMQSILEVADNSGAKKVMCIKVLGGSHHMVAKLGDVIVVSVKEAIPGGKVKKGDVYKGVIVRTKTGVVRPDGSTIKFDKNALVLLNKQDEPIGTRVFGPVTRELRAKKYVRIMSLAEEVL.

It belongs to the universal ribosomal protein uL14 family. Part of the 50S ribosomal subunit. Forms a cluster with proteins L3 and L19. In the 70S ribosome, L14 and L19 interact and together make contacts with the 16S rRNA in bridges B5 and B8.

Functionally, binds to 23S rRNA. Forms part of two intersubunit bridges in the 70S ribosome. This Rickettsia felis (strain ATCC VR-1525 / URRWXCal2) (Rickettsia azadi) protein is Large ribosomal subunit protein uL14.